A 282-amino-acid polypeptide reads, in one-letter code: Aldo-keto reductase BQ2027_MB2996 (282 aa).

The Proton donor role is filled by Tyr-57. Leu-197, Val-235, Arg-237, Ser-238, Ala-239, Arg-243, Ser-246, Asn-247, and Arg-273 together coordinate NADPH.

Belongs to the aldo/keto reductase family.

The protein is Aldo-keto reductase BQ2027_MB2996 of Mycobacterium bovis (strain ATCC BAA-935 / AF2122/97).